A 258-amino-acid chain; its full sequence is Putative L-lactate dehydrogenase operon regulatory protein (258 aa).

The HTH gntR-type domain occupies 6–74; the sequence is RRLSDEVADR…RGGGTFIRWR (69 aa). Positions 34–53 form a DNA-binding region, H-T-H motif; the sequence is ERQLAMQLGVSRNSLREALA.

May be a regulatory protein for the LCT genes. This is Putative L-lactate dehydrogenase operon regulatory protein (lldR) from Escherichia coli (strain K12).